A 668-amino-acid chain; its full sequence is DNA mismatch repair protein MutL (668 aa).

Positions 437–459 (TYQSQYSETGSHSQETLPLSEQK) are disordered. A compositionally biased stretch (polar residues) spans 438 to 459 (YQSQYSETGSHSQETLPLSEQK).

It belongs to the DNA mismatch repair MutL/HexB family.

This protein is involved in the repair of mismatches in DNA. It is required for dam-dependent methyl-directed DNA mismatch repair. May act as a 'molecular matchmaker', a protein that promotes the formation of a stable complex between two or more DNA-binding proteins in an ATP-dependent manner without itself being part of a final effector complex. The chain is DNA mismatch repair protein MutL from Leuconostoc citreum (strain KM20).